Here is a 424-residue protein sequence, read N- to C-terminus: Proline--tRNA ligase (424 aa).

This sequence belongs to the class-II aminoacyl-tRNA synthetase family. ProS type 2 subfamily. As to quaternary structure, homodimer.

It is found in the cytoplasm. The catalysed reaction is tRNA(Pro) + L-proline + ATP = L-prolyl-tRNA(Pro) + AMP + diphosphate. Functionally, catalyzes the attachment of proline to tRNA(Pro) in a two-step reaction: proline is first activated by ATP to form Pro-AMP and then transferred to the acceptor end of tRNA(Pro). The polypeptide is Proline--tRNA ligase (Ehrlichia canis (strain Jake)).